Reading from the N-terminus, the 207-residue chain is MIGIIDYGMGNLHSVSKALERLAIPYFISSDGEELAKAKALILPGVGAFPDAMNILTQTNVQPFLDNWVAENKPLLGICLGMQLLFESSNEHQPTAGLGYLPGRVERFSGTTAEGHAYKVPHMGWNKLEFHRPTPLTEGVPDGYVYFVHSYVVRTETDIVVASSDYYQSVPAIVQKGQVYGMQFHPEKSSTVGMALLKRFGQLVEGN.

Residues 1-207 (MIGIIDYGMG…KRFGQLVEGN (207 aa)) form the Glutamine amidotransferase type-1 domain. Cys79 (nucleophile) is an active-site residue. Active-site residues include His185 and Glu187.

In terms of assembly, heterodimer of HisH and HisF.

It localises to the cytoplasm. It carries out the reaction 5-[(5-phospho-1-deoxy-D-ribulos-1-ylimino)methylamino]-1-(5-phospho-beta-D-ribosyl)imidazole-4-carboxamide + L-glutamine = D-erythro-1-(imidazol-4-yl)glycerol 3-phosphate + 5-amino-1-(5-phospho-beta-D-ribosyl)imidazole-4-carboxamide + L-glutamate + H(+). The enzyme catalyses L-glutamine + H2O = L-glutamate + NH4(+). Its pathway is amino-acid biosynthesis; L-histidine biosynthesis; L-histidine from 5-phospho-alpha-D-ribose 1-diphosphate: step 5/9. Functionally, IGPS catalyzes the conversion of PRFAR and glutamine to IGP, AICAR and glutamate. The HisH subunit catalyzes the hydrolysis of glutamine to glutamate and ammonia as part of the synthesis of IGP and AICAR. The resulting ammonia molecule is channeled to the active site of HisF. This Shouchella clausii (strain KSM-K16) (Alkalihalobacillus clausii) protein is Imidazole glycerol phosphate synthase subunit HisH.